The chain runs to 74 residues: Conotoxin Vi15a (74 aa).

Positions 1–19 (MMPVILLLLLSLAIRCADG) are cleaved as a signal peptide. A propeptide spanning residues 20–43 (KAVQGDSDPSASLLTGDKNHDLPV) is cleaved from the precursor. At Trp72 the chain carries Tryptophan amide.

In terms of processing, contains four disulfide bonds. In terms of tissue distribution, expressed by the venom duct.

It localises to the secreted. This Conus virgo (Virgin cone) protein is Conotoxin Vi15a.